Consider the following 187-residue polypeptide: Ribose 1,5-bisphosphate phosphokinase PhnN (187 aa).

ATP is bound at residue 9-16; the sequence is GPSGSGKD.

Belongs to the ribose 1,5-bisphosphokinase family.

It catalyses the reaction alpha-D-ribose 1,5-bisphosphate + ATP = 5-phospho-alpha-D-ribose 1-diphosphate + ADP. Its pathway is metabolic intermediate biosynthesis; 5-phospho-alpha-D-ribose 1-diphosphate biosynthesis; 5-phospho-alpha-D-ribose 1-diphosphate from D-ribose 5-phosphate (route II): step 3/3. Catalyzes the phosphorylation of ribose 1,5-bisphosphate to 5-phospho-D-ribosyl alpha-1-diphosphate (PRPP). The chain is Ribose 1,5-bisphosphate phosphokinase PhnN from Desulfomicrobium baculatum (strain DSM 4028 / VKM B-1378 / X) (Desulfovibrio baculatus).